A 232-amino-acid chain; its full sequence is Uracil phosphoribosyltransferase (232 aa).

38 to 42 (KGLVR) contacts GTP. 5-phospho-alpha-D-ribose 1-diphosphate-binding positions include Arg87, Arg112, and 140–148 (DPMIATGST). Residues Ile204 and 209–211 (GDA) each bind uracil. Residue Asp210 coordinates 5-phospho-alpha-D-ribose 1-diphosphate.

The protein belongs to the UPRTase family. It depends on Mg(2+) as a cofactor.

The catalysed reaction is UMP + diphosphate = 5-phospho-alpha-D-ribose 1-diphosphate + uracil. It participates in pyrimidine metabolism; UMP biosynthesis via salvage pathway; UMP from uracil: step 1/1. Its activity is regulated as follows. Allosterically activated by GTP. Catalyzes the conversion of uracil and 5-phospho-alpha-D-ribose 1-diphosphate (PRPP) to UMP and diphosphate. This is Uracil phosphoribosyltransferase from Methanococcus vannielii (strain ATCC 35089 / DSM 1224 / JCM 13029 / OCM 148 / SB).